Reading from the N-terminus, the 211-residue chain is Superoxide dismutase [Fe] (211 aa).

Residues His34, His85, Asp171, and His175 each contribute to the Fe cation site.

It belongs to the iron/manganese superoxide dismutase family. As to quaternary structure, homotetramer. It depends on Fe cation as a cofactor.

The protein localises to the cytoplasm. It carries out the reaction 2 superoxide + 2 H(+) = H2O2 + O2. Functionally, destroys superoxide anion radicals which are normally produced within the cells and which are toxic to biological systems. The polypeptide is Superoxide dismutase [Fe] (sod) (Saccharolobus solfataricus (strain ATCC 35092 / DSM 1617 / JCM 11322 / P2) (Sulfolobus solfataricus)).